We begin with the raw amino-acid sequence, 286 residues long: Peroxisomal membrane protein pex14 (286 aa).

The SH3-binding motif lies at 61–69; sequence TSNFVSRDW. The stretch at 122-214 forms a coiled coil; it reads KILENLDEQT…REISSLRCLQ (93 aa). Residues 218 to 239 are disordered; sequence KKDDTFATTSNSSIPVLENPLD.

The protein belongs to the peroxin-14 family. Interacts with PEX13 (via SH3 domain); forming the PEX13-PEX14 docking complex. Interacts with PEX5 (via WxxxF/Y motifs).

Its subcellular location is the peroxisome membrane. Its function is as follows. Component of the PEX13-PEX14 docking complex, a translocon channel that specifically mediates the import of peroxisomal cargo proteins bound to PEX5 receptor. The PEX13-PEX14 docking complex forms a large import pore which can be opened to a diameter of about 9 nm. Mechanistically, PEX5 receptor along with cargo proteins associates with the PEX14 subunit of the PEX13-PEX14 docking complex in the cytosol, leading to the insertion of the receptor into the organelle membrane with the concomitant translocation of the cargo into the peroxisome matrix. The protein is Peroxisomal membrane protein pex14 (pex14) of Schizosaccharomyces pombe (strain 972 / ATCC 24843) (Fission yeast).